A 565-amino-acid chain; its full sequence is Putative pentatricopeptide repeat-containing protein At3g05240 (565 aa).

PPR repeat units lie at residues Asn37–Pro70, Ser71–Pro105, Asp106–Val140, Asn141–Trp171, Asn172–Ala206, Asn207–Pro241, Asn250–Arg280, Thr281–Pro315, Asp316–Lys350, Asp351–Lys381, Asp382–Thr416, Asp418–Leu448, and Thr454–Lys484. Positions Ile489–Met564 are type E motif.

This sequence belongs to the PPR family. PCMP-E subfamily.

This chain is Putative pentatricopeptide repeat-containing protein At3g05240 (PCMP-E82), found in Arabidopsis thaliana (Mouse-ear cress).